The following is a 78-amino-acid chain: RNA-binding protein KhpA (78 aa).

The KH domain occupies Thr-29–Lys-78.

This sequence belongs to the KhpA RNA-binding protein family.

Its subcellular location is the cytoplasm. Functionally, a probable RNA-binding protein. The polypeptide is RNA-binding protein KhpA (Chlamydia pneumoniae (Chlamydophila pneumoniae)).